Here is a 687-residue protein sequence, read N- to C-terminus: Ribosomal RNA processing protein 1 homolog (687 aa).

Positions 288–298 (DEEDDEVNAEE) are enriched in acidic residues. 2 disordered regions span residues 288–312 (DEEDDEVNAEEEQPRATSLDPRAGN) and 463–624 (VKEA…GSGK). 3 stretches are compositionally biased toward basic and acidic residues: residues 463-488 (VKEAEPKSKKAKKEEPPQQNKDDQTK), 497-520 (PKNDQSKPKIEDQPTLKAEKEEPA), and 527-543 (HSKTKEEQSKPKTDEQP). A compositionally biased stretch (low complexity) spans 554-564 (KAKPTPKTKAA). The span at 596-608 (KQANSKLPQSTPK) shows a compositional bias: polar residues. Residues T617 and T620 each carry the phosphothreonine modification. At S622 the chain carries Phosphoserine.

Belongs to the RRP1 family.

Its subcellular location is the nucleus. Its function is as follows. May be involved in the generation of 28S rRNA. The chain is Ribosomal RNA processing protein 1 homolog (Nnp-1) from Drosophila melanogaster (Fruit fly).